The following is a 478-amino-acid chain: Glutamyl-tRNA(Gln) amidotransferase subunit A (478 aa).

Active-site charge relay system residues include lysine 72 and serine 147. Serine 171 acts as the Acyl-ester intermediate in catalysis.

Belongs to the amidase family. GatA subfamily. As to quaternary structure, heterotrimer of A, B and C subunits.

The catalysed reaction is L-glutamyl-tRNA(Gln) + L-glutamine + ATP + H2O = L-glutaminyl-tRNA(Gln) + L-glutamate + ADP + phosphate + H(+). In terms of biological role, allows the formation of correctly charged Gln-tRNA(Gln) through the transamidation of misacylated Glu-tRNA(Gln) in organisms which lack glutaminyl-tRNA synthetase. The reaction takes place in the presence of glutamine and ATP through an activated gamma-phospho-Glu-tRNA(Gln). The protein is Glutamyl-tRNA(Gln) amidotransferase subunit A of Saccharolobus solfataricus (strain ATCC 35092 / DSM 1617 / JCM 11322 / P2) (Sulfolobus solfataricus).